A 246-amino-acid polypeptide reads, in one-letter code: Sensory transduction protein LytT (246 aa).

Positions 3 to 117 (KVLVVDDEML…RIVQTLKKYK (115 aa)) constitute a Response regulatory domain. Residue aspartate 54 is modified to 4-aspartylphosphate. The 105-residue stretch at 142 to 246 (LALPIEESIV…AKELKKLLRI (105 aa)) folds into the HTH LytTR-type domain.

In terms of processing, phosphorylated by LytS.

The protein resides in the cytoplasm. Member of the two-component regulatory system LytS/LytT that probably regulates genes involved in cell wall metabolism. This Bacillus anthracis protein is Sensory transduction protein LytT (lytT).